The sequence spans 603 residues: UvrABC system protein C (603 aa).

The 78-residue stretch at 15–92 (DQPGCYLMKD…IKKHDPRFNI (78 aa)) folds into the GIY-YIG domain. The UVR domain occupies 197-232 (KTVKNDLMKKMQVAAENMEFEKAGEFRDQINAIETT).

Belongs to the UvrC family. As to quaternary structure, interacts with UvrB in an incision complex.

The protein resides in the cytoplasm. In terms of biological role, the UvrABC repair system catalyzes the recognition and processing of DNA lesions. UvrC both incises the 5' and 3' sides of the lesion. The N-terminal half is responsible for the 3' incision and the C-terminal half is responsible for the 5' incision. The protein is UvrABC system protein C of Listeria welshimeri serovar 6b (strain ATCC 35897 / DSM 20650 / CCUG 15529 / CIP 8149 / NCTC 11857 / SLCC 5334 / V8).